The chain runs to 212 residues: Pyrrolidone-carboxylate peptidase (212 aa).

Active-site residues include E78, C141, and H165.

Belongs to the peptidase C15 family. In terms of assembly, homotetramer.

It is found in the cytoplasm. The enzyme catalyses Release of an N-terminal pyroglutamyl group from a polypeptide, the second amino acid generally not being Pro.. Its function is as follows. Removes 5-oxoproline from various penultimate amino acid residues except L-proline. This chain is Pyrrolidone-carboxylate peptidase, found in Staphylococcus aureus (strain NCTC 8325 / PS 47).